A 142-amino-acid chain; its full sequence is Large ribosomal subunit protein uL13 (142 aa).

Belongs to the universal ribosomal protein uL13 family. As to quaternary structure, part of the 50S ribosomal subunit.

Functionally, this protein is one of the early assembly proteins of the 50S ribosomal subunit, although it is not seen to bind rRNA by itself. It is important during the early stages of 50S assembly. The polypeptide is Large ribosomal subunit protein uL13 (Shewanella amazonensis (strain ATCC BAA-1098 / SB2B)).